The sequence spans 351 residues: Nicotinate-nucleotide--dimethylbenzimidazole phosphoribosyltransferase (351 aa).

Glu-317 acts as the Proton acceptor in catalysis.

The protein belongs to the CobT family.

The enzyme catalyses 5,6-dimethylbenzimidazole + nicotinate beta-D-ribonucleotide = alpha-ribazole 5'-phosphate + nicotinate + H(+). It participates in nucleoside biosynthesis; alpha-ribazole biosynthesis; alpha-ribazole from 5,6-dimethylbenzimidazole: step 1/2. Catalyzes the synthesis of alpha-ribazole-5'-phosphate from nicotinate mononucleotide (NAMN) and 5,6-dimethylbenzimidazole (DMB). The sequence is that of Nicotinate-nucleotide--dimethylbenzimidazole phosphoribosyltransferase from Pseudomonas putida (strain GB-1).